The sequence spans 662 residues: Hypoxia-inducible factor 3-alpha (662 aa).

Positions 1 to 25 are disordered; the sequence is MDWDQDRSSTELRKEKSRDAARSRR. A bHLH domain is found at 12-65; the sequence is LRKEKSRDAARSRRSQETEVLYQLAHTLPFARGVSAHLDKASIMRLTISYLRMH. The tract at residues 75–98 is nuclear localization signal; that stretch reads QVRKEGEPLDACYLKALEGFVMVL. PAS domains are found at residues 80–150 and 225–295; these read GEPL…PSLS and PHPA…LSKG. Residues 228 to 272 form a nuclear export signal region; the sequence is ASLEPPLGRGAFLSRHSLDMKFTYCDERIAEVAGYSPDDLIGCSA. Positions 352-379 are disordered; it reads EQTEQHTRRPPQLGTSSKKGIPGNSLDP. An LRRLL motif is present at residues 410-413; that stretch reads LRRL. Disordered stretches follow at residues 417 to 445 and 459 to 480; these read ILDG…ADLP and STAR…PDTP. Residues 421-433 show a composition bias toward low complexity; sequence PPTAATPSTPQAA. The segment at 448–581 is ODD; sequence LAVGLENAHR…SEDKGLELLE (134 aa). An NTAD region spans residues 450–501; sequence VGLENAHRLSTARKNKTMETDLDIAQDPDTPDLEMLAPYISMDDDFQLNSSE. A Glycyl lysine isopeptide (Lys-Gly) (interchain with G-Cter in ubiquitin) cross-link involves residue lysine 463. The segment covering 469–480 has biased composition (acidic residues); sequence TDLDIAQDPDTP. Residues 485–492 carry the LAPYISMD motif; sequence LAPYISMD. Proline 487 bears the 4-hydroxyproline mark. Positions 500–595 are disordered; that stretch reads SEQLPKVHRR…KRSPRLEPGS (96 aa). The segment covering 505-521 has biased composition (basic residues); the sequence is KVHRRPPRTARRPRARS. Residue lysine 565 forms a Glycyl lysine isopeptide (Lys-Gly) (interchain with G-Cter in ubiquitin) linkage. Basic and acidic residues predominate over residues 572 to 584; that stretch reads SEDKGLELLETKP.

As to quaternary structure, interacts with ARNT, BAD, BCL2L2, EPAS1, HIF1A, MCL1 and VHL. In terms of processing, in normoxia, hydroxylated on Pro-487 in the oxygen-dependent degradation domain (ODD) by PHD. The hydroxylated proline promotes interaction with VHL, initiating rapid ubiquitination and subsequent proteasomal degradation. Post-translationally, ubiquitinated; ubiquitination occurs in a VHL- and oxygen-dependent pathway and subsequently targeted for proteasomal degradation. As to expression, expressed in the perivenous zone of the liver. Expressed in all tissues examined during normoxia. Expressed in brain and lung. Expressed in periportal and perivenous hepatocytes and in endothelial cells of the central vein (at protein level). Highest expression seen in the cerebral cortex, hippocampus, and lung. Low expression in myocardial tissue and liver.

The protein resides in the nucleus. It is found in the cytoplasm. It localises to the nucleus speckle. Its subcellular location is the mitochondrion. Its function is as follows. Acts as a transcriptional regulator in adaptive response to low oxygen tension. Attenuates the ability of transcription factor HIF1A, EPAS1 and the HIF1A-ARNT complex to bind to hypoxia-responsive elements (HRE) located within the enhancer/promoter of hypoxia-inducible target genes and hence inhibits HRE-driven transcriptional activation. Functions as an inhibitor of angiogenesis in hypoxic cells of the cornea. Plays a role in the development of the cardiorespiratory system. May also be involved in apoptosis. May act as a tumor suppressor. In Rattus norvegicus (Rat), this protein is Hypoxia-inducible factor 3-alpha.